We begin with the raw amino-acid sequence, 207 residues long: Urease accessory protein UreG (207 aa).

Position 12 to 19 (Gly12 to Thr19) interacts with GTP.

It belongs to the SIMIBI class G3E GTPase family. UreG subfamily. Homodimer. UreD, UreF and UreG form a complex that acts as a GTP-hydrolysis-dependent molecular chaperone, activating the urease apoprotein by helping to assemble the nickel containing metallocenter of UreC. The UreE protein probably delivers the nickel.

The protein resides in the cytoplasm. Its function is as follows. Facilitates the functional incorporation of the urease nickel metallocenter. This process requires GTP hydrolysis, probably effectuated by UreG. In Cereibacter sphaeroides (strain KD131 / KCTC 12085) (Rhodobacter sphaeroides), this protein is Urease accessory protein UreG.